The chain runs to 1036 residues: MDNEDKISISAKEEKILSFWKEQDIFQKTLDNREGCPTFSFYDGPPFATGLPHYGHLLAGTIKDVVCRYASMDGHYVPRRFGWDCHGVPVEYEVEKSLGLTEPGAIERFGVANFNEECRKIVFRYADEWKYFVDRIGRWVDFSATWRTMDLSFMESVWWVFRSLYDQGLVYEGTKVVPFSTKLGTPLSNFEAGQNYKEVDDPSVVVKFALQDNQGFLLAWTTTPWTLVSNMALAVHPELTYVRIKDKESGDEYILGQESLPRWFPDRESYEWIGQLSGKSLVGQSYEPLFPYFQDKKELGAFRILPADFIEESEGTGIVHMAPAFGEADFFACQEHNVPLVCPVDNQGCYTAEVKDFVGEYIKSADKGIARRLKNENKLFYQGTVRHRYPFCWRTDSPLIYKAVNSWFVAVEKVKSKMLKANESIHWTPGHIKQGRFGKWLEGARDWAISRNRYWGTPIPIWRSDDGELLVIGSIQELEALSGQKIVDLHRHFIDEIEINQNGKSFRRIPYVFDCWFDSGAMPYAQNHYPFERAEETEACFPADFIAEGLDQTRGWFYTLTVIAAALFDQPAFKNVIVNGIILAEDGNKMSKRLNNYPSPKMIMDAYGADALRLYLLNSVVVKAEDLRFSDKGVESVLKQVLLPLSNALAFYKTYAELYGFDPKETDNIELAEIDRWILSSLYSLLGKTRESMSQYDLHAAVNPFVDFIEDLTNWYIRRSRRRFWDAEDSADRRAAFSTLYEVLVVFSKVIAPFIPFISEDMYQQLRGETDPESVHLCDFPHVVLEKILPNLERKMQDIREIVALGHSLRKEHKLKVRQPLQNVYIVGSQERMEALAQVGSLIGEELNVKDVHFCSETPEYVTTLIKPNFRTLGKKVGNRLPEIQRALAGLPQEQIQAFMHKGQMVVSLGEETISLDKEDITVSWASAEGFVARSSASFVAVLDCQLTEPLIMEGIARELVNKINTMRRNGKLHVSDRIAIRLHAPVIVQEAFALHKEYICEETLTTSVSVIDYKEGEEWDINGHAVSFVLERVER.

Positions P46–H56 match the 'HIGH' region motif. Residues K589–R593 carry the 'KMSKS' region motif. ATP is bound at residue K592.

Belongs to the class-I aminoacyl-tRNA synthetase family. IleS type 2 subfamily. In terms of assembly, monomer. It depends on Zn(2+) as a cofactor.

It localises to the cytoplasm. It carries out the reaction tRNA(Ile) + L-isoleucine + ATP = L-isoleucyl-tRNA(Ile) + AMP + diphosphate. Its function is as follows. Catalyzes the attachment of isoleucine to tRNA(Ile). As IleRS can inadvertently accommodate and process structurally similar amino acids such as valine, to avoid such errors it has two additional distinct tRNA(Ile)-dependent editing activities. One activity is designated as 'pretransfer' editing and involves the hydrolysis of activated Val-AMP. The other activity is designated 'posttransfer' editing and involves deacylation of mischarged Val-tRNA(Ile). The polypeptide is Isoleucine--tRNA ligase (Chlamydia trachomatis serovar L2b (strain UCH-1/proctitis)).